Reading from the N-terminus, the 425-residue chain is Glutamate-1-semialdehyde 2,1-aminomutase (425 aa).

The residue at position 265 (Lys-265) is an N6-(pyridoxal phosphate)lysine.

The protein belongs to the class-III pyridoxal-phosphate-dependent aminotransferase family. HemL subfamily. As to quaternary structure, homodimer. Pyridoxal 5'-phosphate serves as cofactor.

The protein localises to the cytoplasm. It carries out the reaction (S)-4-amino-5-oxopentanoate = 5-aminolevulinate. It participates in porphyrin-containing compound metabolism; protoporphyrin-IX biosynthesis; 5-aminolevulinate from L-glutamyl-tRNA(Glu): step 2/2. The polypeptide is Glutamate-1-semialdehyde 2,1-aminomutase (Opitutus terrae (strain DSM 11246 / JCM 15787 / PB90-1)).